Reading from the N-terminus, the 1040-residue chain is DNA mismatch repair protein MutS (1040 aa).

Polar residues predominate over residues 1–10 (MPVKPSAQNN). Disordered stretches follow at residues 1-22 (MPVK…SVPV) and 130-157 (ATGT…SKST). Residues 11 to 22 (SPSKPTSKSVPV) show a composition bias toward low complexity. The segment covering 130–143 (ATGTDNANNPSNAP) has biased composition (polar residues). An ATP-binding site is contributed by 759-766 (GPNMGGKS).

Belongs to the DNA mismatch repair MutS family.

Its function is as follows. This protein is involved in the repair of mismatches in DNA. It is possible that it carries out the mismatch recognition step. This protein has a weak ATPase activity. The sequence is that of DNA mismatch repair protein MutS from Psychrobacter cryohalolentis (strain ATCC BAA-1226 / DSM 17306 / VKM B-2378 / K5).